Consider the following 409-residue polypeptide: Elongation factor Tu (409 aa).

In terms of domain architecture, tr-type G spans 10–214 (KPHLNIGTIG…AVDSFIPTPE (205 aa)). The tract at residues 19–26 (GHVDHGKT) is G1. 19 to 26 (GHVDHGKT) provides a ligand contact to GTP. Thr26 is a Mg(2+) binding site. Residues 60 to 64 (GITIN) form a G2 region. The G3 stretch occupies residues 81–84 (DCPG). GTP-binding positions include 81-85 (DCPGH) and 136-139 (NKED). The segment at 136–139 (NKED) is G4. The tract at residues 174–176 (SGL) is G5.

Belongs to the TRAFAC class translation factor GTPase superfamily. Classic translation factor GTPase family. EF-Tu/EF-1A subfamily. As to quaternary structure, monomer.

It is found in the cytoplasm. The catalysed reaction is GTP + H2O = GDP + phosphate + H(+). GTP hydrolase that promotes the GTP-dependent binding of aminoacyl-tRNA to the A-site of ribosomes during protein biosynthesis. The chain is Elongation factor Tu from Nostoc punctiforme (strain ATCC 29133 / PCC 73102).